The chain runs to 219 residues: 3,4-dihydroxy-2-butanone 4-phosphate synthase (219 aa).

Residues 37-38 (RE), aspartate 42, 150-154 (RRGHT), and glutamate 174 contribute to the D-ribulose 5-phosphate site. Glutamate 38 serves as a coordination point for Mg(2+). Position 153 (histidine 153) interacts with Mg(2+).

It belongs to the DHBP synthase family. As to quaternary structure, homodimer. Requires Mg(2+) as cofactor. Mn(2+) is required as a cofactor.

The enzyme catalyses D-ribulose 5-phosphate = (2S)-2-hydroxy-3-oxobutyl phosphate + formate + H(+). It functions in the pathway cofactor biosynthesis; riboflavin biosynthesis; 2-hydroxy-3-oxobutyl phosphate from D-ribulose 5-phosphate: step 1/1. Functionally, catalyzes the conversion of D-ribulose 5-phosphate to formate and 3,4-dihydroxy-2-butanone 4-phosphate. This is 3,4-dihydroxy-2-butanone 4-phosphate synthase from Edwardsiella ictaluri (strain 93-146).